We begin with the raw amino-acid sequence, 306 residues long: Glutamyl-Q tRNA(Asp) synthetase (306 aa).

L-glutamate is bound by residues arginine 4–serine 8 and glutamate 40. A 'HIGH' region motif is present at residues proline 7 to asparagine 17. Residues cysteine 92, cysteine 94, tyrosine 113, and cysteine 117 each contribute to the Zn(2+) site. L-glutamate-binding residues include tyrosine 180 and arginine 198. A 'KMSKS' region motif is present at residues arginine 236–arginine 240. Lysine 239 contributes to the ATP binding site.

This sequence belongs to the class-I aminoacyl-tRNA synthetase family. GluQ subfamily. Requires Zn(2+) as cofactor.

Catalyzes the tRNA-independent activation of glutamate in presence of ATP and the subsequent transfer of glutamate onto a tRNA(Asp). Glutamate is transferred on the 2-amino-5-(4,5-dihydroxy-2-cyclopenten-1-yl) moiety of the queuosine in the wobble position of the QUC anticodon. This Corynebacterium efficiens (strain DSM 44549 / YS-314 / AJ 12310 / JCM 11189 / NBRC 100395) protein is Glutamyl-Q tRNA(Asp) synthetase.